The primary structure comprises 203 residues: NAD(P)H-quinone oxidoreductase subunit I (203 aa).

4Fe-4S ferredoxin-type domains are found at residues 55 to 84 (GRIH…VDWE) and 95 to 124 (KHYS…MTEE). [4Fe-4S] cluster-binding residues include cysteine 64, cysteine 67, cysteine 70, cysteine 74, cysteine 104, cysteine 107, cysteine 110, and cysteine 114.

It belongs to the complex I 23 kDa subunit family. As to quaternary structure, NDH-1 is composed of at least 11 different subunits. [4Fe-4S] cluster is required as a cofactor.

The protein localises to the cellular thylakoid membrane. It catalyses the reaction a plastoquinone + NADH + (n+1) H(+)(in) = a plastoquinol + NAD(+) + n H(+)(out). The catalysed reaction is a plastoquinone + NADPH + (n+1) H(+)(in) = a plastoquinol + NADP(+) + n H(+)(out). NDH-1 shuttles electrons from an unknown electron donor, via FMN and iron-sulfur (Fe-S) centers, to quinones in the respiratory and/or the photosynthetic chain. The immediate electron acceptor for the enzyme in this species is believed to be plastoquinone. Couples the redox reaction to proton translocation, and thus conserves the redox energy in a proton gradient. The sequence is that of NAD(P)H-quinone oxidoreductase subunit I (ndhI) from Picosynechococcus sp. (strain ATCC 27264 / PCC 7002 / PR-6) (Agmenellum quadruplicatum).